The sequence spans 225 residues: Probable methylthioribulose-1-phosphate dehydratase (225 aa).

Cys86 contributes to the substrate binding site. The Zn(2+) site is built by His104 and His106. The active-site Proton donor/acceptor is the Glu127. His183 lines the Zn(2+) pocket.

This sequence belongs to the aldolase class II family. MtnB subfamily. Zn(2+) is required as a cofactor.

Its subcellular location is the cytoplasm. The enzyme catalyses 5-(methylsulfanyl)-D-ribulose 1-phosphate = 5-methylsulfanyl-2,3-dioxopentyl phosphate + H2O. It participates in amino-acid biosynthesis; L-methionine biosynthesis via salvage pathway; L-methionine from S-methyl-5-thio-alpha-D-ribose 1-phosphate: step 2/6. Its function is as follows. Catalyzes the dehydration of methylthioribulose-1-phosphate (MTRu-1-P) into 2,3-diketo-5-methylthiopentyl-1-phosphate (DK-MTP-1-P). This chain is Probable methylthioribulose-1-phosphate dehydratase, found in Leishmania braziliensis.